The primary structure comprises 208 residues: Uracil phosphoribosyltransferase (208 aa).

5-phospho-alpha-D-ribose 1-diphosphate is bound by residues Arg78, Arg103, and 130 to 138 (DPMLATGGS). Residues Ile193 and 198 to 200 (GDA) contribute to the uracil site. Position 199 (Asp199) interacts with 5-phospho-alpha-D-ribose 1-diphosphate.

This sequence belongs to the UPRTase family. Requires Mg(2+) as cofactor.

The enzyme catalyses UMP + diphosphate = 5-phospho-alpha-D-ribose 1-diphosphate + uracil. Its pathway is pyrimidine metabolism; UMP biosynthesis via salvage pathway; UMP from uracil: step 1/1. With respect to regulation, allosterically activated by GTP. Functionally, catalyzes the conversion of uracil and 5-phospho-alpha-D-ribose 1-diphosphate (PRPP) to UMP and diphosphate. This chain is Uracil phosphoribosyltransferase, found in Tolumonas auensis (strain DSM 9187 / NBRC 110442 / TA 4).